The following is a 226-amino-acid chain: Ribosomal RNA small subunit methyltransferase Nep1 (226 aa).

S-adenosyl-L-methionine is bound by residues Gly176, Gly181, and 197-202 (IYEESL).

It belongs to the class IV-like SAM-binding methyltransferase superfamily. RNA methyltransferase NEP1 family. In terms of assembly, homodimer.

The enzyme catalyses a pseudouridine in rRNA + S-adenosyl-L-methionine = an N(1)-methylpseudouridine in rRNA + S-adenosyl-L-homocysteine + H(+). Methyltransferase involved in ribosomal biogenesis. Specifically catalyzes the N1-methylation of the pseudouridine corresponding to position 914 in M.jannaschii 16S rRNA. The chain is Ribosomal RNA small subunit methyltransferase Nep1 from Methanothrix thermoacetophila (strain DSM 6194 / JCM 14653 / NBRC 101360 / PT) (Methanosaeta thermophila).